A 230-amino-acid polypeptide reads, in one-letter code: MKSLNTLVILTSVISTSVFAGAYVENREAYNLASDQMEFMLRVGYNSDMGAGIMLTNTYTLQRDDELKHGYNEIEGWYPLFKPTDKLTIQPGGLINDKSIGSGGAVYLDVNYKFTPWFNLTVRNRYNHNNYSSTDLNGELDNNDSYEIGNYWNFIITDKFSYTFEPHYFYNINDFNSSNGTKHHWEITNTFRYRINEHWLPYFELRWLDRNVGPYHREQNQIRIGAKYFF.

Residues 1–20 form the signal peptide; sequence MKSLNTLVILTSVISTSVFA.

It belongs to the oligogalacturonate-specific porin KdgM (TC 1.B.35) family. OmpL subfamily.

The protein localises to the cell outer membrane. In terms of biological role, outer membrane channel protein that allows an efficient diffusion of low-molecular-weight solutes such as small sugars and tetraglycine. However, the specific substrate recognized by the OmpL channel is unknown. The sequence is that of Porin OmpL (ompL) from Salmonella paratyphi A (strain ATCC 9150 / SARB42).